Consider the following 146-residue polypeptide: Snaclec mucetin subunit beta (146 aa).

Residues 1–23 form the signal peptide; it reads MGRFIFVSFGLLVVFISLSGTEA. 3 cysteine pairs are disulfide-bonded: Cys-27–Cys-38, Cys-55–Cys-144, and Cys-121–Cys-136. The C-type lectin domain maps to 34 to 145; sequence YDEHCYQVFQ…CSSKRYVVCK (112 aa).

It belongs to the snaclec family. As to quaternary structure, dimer and tetramer of heterodimers of alpha and beta subunits ((alphabeta)(2) and (alphabeta)(4)); disulfide-linked. These two multimeric forms are found. Post-translationally, the complex is glycosylated. As to expression, expressed by the venom gland.

It is found in the secreted. Potent platelet activator that acts via GPIb (GP1BA/GP1BB). After activation by the toxin, the receptor is redistributed on platelet surface thanks to cytoskeletal translocation. The indirect activation of integrin alpha-IIb/beta-3 (ITGA2B/ITGB3) also induced by the toxin is downstream the cytoskeletal translocation of GPIb. The chain is Snaclec mucetin subunit beta from Protobothrops mucrosquamatus (Taiwan habu).